The sequence spans 138 residues: Nucleoside diphosphate kinase (138 aa).

6 residues coordinate ATP: lysine 9, phenylalanine 57, arginine 85, threonine 91, arginine 102, and asparagine 112. Histidine 115 acts as the Pros-phosphohistidine intermediate in catalysis.

Belongs to the NDK family. Homotetramer. The cofactor is Mg(2+).

Its subcellular location is the cytoplasm. It catalyses the reaction a 2'-deoxyribonucleoside 5'-diphosphate + ATP = a 2'-deoxyribonucleoside 5'-triphosphate + ADP. The enzyme catalyses a ribonucleoside 5'-diphosphate + ATP = a ribonucleoside 5'-triphosphate + ADP. Major role in the synthesis of nucleoside triphosphates other than ATP. The ATP gamma phosphate is transferred to the NDP beta phosphate via a ping-pong mechanism, using a phosphorylated active-site intermediate. This Desulfatibacillum aliphaticivorans protein is Nucleoside diphosphate kinase.